The chain runs to 1018 residues: MGVPSFFRWLSRKYPKIISPVLEEPQQLVDGVALPIDYAGPNPNGELDNLYLDMNGIVHPCSHPENKPPPETEDDMLLAVFEYTNRVLNMARPRKVLVIAVDGVAPRAKMNQQRSRRFRSARDAEIENEAREEIMRQKEQLGQIIDDSVKNKKTWDSNAITPGTPFMDKLAIALRYWTAFKLATDPGWKNLQVIISDATVPGEGEHKIMNFIRSQRADPEYNPNTTHCIYGLDADLIFLGLATHEPHFKILREDVFAQDNRKRNNVKDTIDMTDEEKDLIRKQDSEKPFLWLHISVLREYLSAELWTPKLPFPFDLERAIDDWVFMCFFCGNDFLPHLPCLDVRENSIDILLDIWKSILPRLKTYMTCDGKLNLESVEMVLKELGNREGDIFKTRHIQEIRKKEANERRKQQKQQNVSTGQDRHPTKFNEQLQMYDTNGSLAKGSWNLTTSDMVRYKKELMLANEGDENSIKIIEEVSERNNSLMKEIQSEMTPEDYKGNNNNFTAAELLKKKLNARKRELEKEKENEEQERASKQPKISETPDESDLTEEIEADVIAEVEDETTPDEKDTDSIITEVPEISNGGITSGVIDTDEAVKLFEPGYHDRYYIEKFHIEPNQIPALSKHMVKCYIEGVSWVLMYYYQGCASWTWYYPYHYAPLAEDFVDFHDLDIKFELGEPFLPYEQLMSVLPAASGHNLPEVFRPLMSSEDSEIIDFYPTEFPIDMNGKKMSWQGIALLPFIDETRLLTATRNQYKFLSEDEKRRNTRNDPVLLISNKNVNYEKFAKRLYKKGHEDNFQLVFHHFKSSLAGIVSTDTEGFKLHAKLPCPIQSGALPELSTNLFLKMQYKLLPLPSANKSLILNGFIPSEPMLTQHDFDSIVYKYGTRGFQRNQRNFGMEMKQNIVPVGPSGTTQYKPRIGGYRSFFYFGQLNQQMHQHNQVYQQNQAPTHDRYRNDRSDRGGRGYGRPDHDRGDYRGDYRGDGYRGGHRGGYRGGSRSRGPSSRGISSRGYSGPSRYNR.

Residues 121–147 (ARDAEIENEAREEIMRQKEQLGQIIDD) adopt a coiled-coil conformation. Disordered stretches follow at residues 402–424 (KKEA…QDRH), 519–549 (RELE…SDLT), and 939–1018 (QVYQ…RYNR). Positions 468–541 (ENSIKIIEEV…RASKQPKISE (74 aa)) form a coiled coil. 2 stretches are compositionally biased toward basic and acidic residues: residues 519 to 534 (RELE…ERAS) and 948 to 984 (THDR…DGYR). Residues 997-1018 (SRGPSSRGISSRGYSGPSRYNR) are compositionally biased toward low complexity.

Belongs to the 5'-3' exonuclease family. XRN2/RAT1 subfamily. As to quaternary structure, interacts with RAI1; the interaction is direct, stabilizes RAT1 protein structure and may stimulate its exoribonuclease activity. The interaction also stimulates RAI1 pyrophosphohydrolase activity, probably by recruiting it to mRNA substrates.

Its subcellular location is the nucleus. Possesses 5'-&gt;3' exoribonuclease activity. Required for the processing of nuclear mRNA and rRNA precursors. May promote the termination of transcription by RNA polymerase II. Essential for vegetative cell growth and chromosome segregation. The protein is 5'-3' exoribonuclease 2 (RAT1) of Candida glabrata (strain ATCC 2001 / BCRC 20586 / JCM 3761 / NBRC 0622 / NRRL Y-65 / CBS 138) (Yeast).